Reading from the N-terminus, the 205-residue chain is uncharacterized protein (205 aa).

This is an uncharacterized protein from Saccharomyces cerevisiae (strain ATCC 204508 / S288c) (Baker's yeast).